Consider the following 136-residue polypeptide: Small ribosomal subunit protein uS9 (136 aa).

It belongs to the universal ribosomal protein uS9 family.

This is Small ribosomal subunit protein uS9 from Synechococcus sp. (strain JA-2-3B'a(2-13)) (Cyanobacteria bacterium Yellowstone B-Prime).